Consider the following 196-residue polypeptide: Nucleoside triphosphate pyrophosphatase (196 aa).

The Proton acceptor role is filled by aspartate 72.

The protein belongs to the Maf family. A divalent metal cation serves as cofactor.

It localises to the cytoplasm. It carries out the reaction a ribonucleoside 5'-triphosphate + H2O = a ribonucleoside 5'-phosphate + diphosphate + H(+). The catalysed reaction is a 2'-deoxyribonucleoside 5'-triphosphate + H2O = a 2'-deoxyribonucleoside 5'-phosphate + diphosphate + H(+). Functionally, nucleoside triphosphate pyrophosphatase. May have a dual role in cell division arrest and in preventing the incorporation of modified nucleotides into cellular nucleic acids. The protein is Nucleoside triphosphate pyrophosphatase of Chlamydia muridarum (strain MoPn / Nigg).